Consider the following 573-residue polypeptide: Mucin-13 (573 aa).

The signal sequence occupies residues 1–17 (MKGFLLLSLSLLLVTVG). Residues 16-234 (VGSSSQASST…VPSGGSTGPS (219 aa)) are compositionally biased toward low complexity. Positions 16 to 237 (VGSSSQASST…GGSTGPSDLC (222 aa)) are disordered. Topologically, residues 18 to 480 (SSSQASSTTS…FGYSGMNCKD (463 aa)) are extracellular. Residues 233 to 273 (PSDLCNPNPCKGTASCVKLHSKHFCLCLEGYYYNSSLSSCV) enclose the EGF-like 1 domain. Cystine bridges form between cysteine 237/cysteine 248, cysteine 242/cysteine 257, and cysteine 259/cysteine 272. Residues asparagine 266, asparagine 316, and asparagine 397 are each glycosylated (N-linked (GlcNAc...) asparagine). An SEA domain is found at 274-391 (KGTTFPGDIS…DYVSINLCDH (118 aa)). 2 EGF-like domains span residues 385-425 (SINL…PFCV) and 425-467 (VAVT…RKCE). Intrachain disulfides connect cysteine 389–cysteine 402, cysteine 394–cysteine 408, cysteine 410–cysteine 424, cysteine 429–cysteine 441, cysteine 433–cysteine 451, and cysteine 453–cysteine 466. A helical transmembrane segment spans residues 481 to 508 (QFQLILTIVGTIAGALILILLIAFIVSA). At 509–573 (RSKNKKKDGE…NQRSMPRPDY (65 aa)) the chain is on the cytoplasmic side. The disordered stretch occupies residues 548-573 (PKVRTGVPSQTPNPYANQRSMPRPDY). Residues 554–567 (VPSQTPNPYANQRS) show a composition bias toward polar residues.

As to quaternary structure, homodimer of beta subunits. Post-translationally, cleaved into two subunits, alpha and beta, probably between the first EGF domain and the SEA domain. Beta subunit contains the cytoplasmic tail and alpha subunit the extracellular tail. The homooligomerization into dimers is dependent on intrachain disulfide bonds. Highly N-glycosylated.

The protein resides in the cell membrane. Its subcellular location is the secreted. Its function is as follows. Epithelial and hemopoietic transmembrane mucin that may play a role in cell signaling. The chain is Mucin-13 (Muc13) from Mus musculus (Mouse).